We begin with the raw amino-acid sequence, 100 residues long: Urease subunit gamma (100 aa).

The protein belongs to the urease gamma subunit family. As to quaternary structure, heterotrimer of UreA (gamma), UreB (beta) and UreC (alpha) subunits. Three heterotrimers associate to form the active enzyme.

It is found in the cytoplasm. The enzyme catalyses urea + 2 H2O + H(+) = hydrogencarbonate + 2 NH4(+). It functions in the pathway nitrogen metabolism; urea degradation; CO(2) and NH(3) from urea (urease route): step 1/1. The polypeptide is Urease subunit gamma (Lachnoclostridium phytofermentans (strain ATCC 700394 / DSM 18823 / ISDg) (Clostridium phytofermentans)).